The primary structure comprises 252 residues: Imidazole glycerol phosphate synthase subunit HisF (252 aa).

Residues aspartate 11 and aspartate 130 contribute to the active site.

This sequence belongs to the HisA/HisF family. Heterodimer of HisH and HisF.

Its subcellular location is the cytoplasm. It carries out the reaction 5-[(5-phospho-1-deoxy-D-ribulos-1-ylimino)methylamino]-1-(5-phospho-beta-D-ribosyl)imidazole-4-carboxamide + L-glutamine = D-erythro-1-(imidazol-4-yl)glycerol 3-phosphate + 5-amino-1-(5-phospho-beta-D-ribosyl)imidazole-4-carboxamide + L-glutamate + H(+). Its pathway is amino-acid biosynthesis; L-histidine biosynthesis; L-histidine from 5-phospho-alpha-D-ribose 1-diphosphate: step 5/9. Its function is as follows. IGPS catalyzes the conversion of PRFAR and glutamine to IGP, AICAR and glutamate. The HisF subunit catalyzes the cyclization activity that produces IGP and AICAR from PRFAR using the ammonia provided by the HisH subunit. The chain is Imidazole glycerol phosphate synthase subunit HisF from Paramagnetospirillum magneticum (strain ATCC 700264 / AMB-1) (Magnetospirillum magneticum).